Here is a 139-residue protein sequence, read N- to C-terminus: Ribulose bisphosphate carboxylase small subunit (139 aa).

The protein belongs to the RuBisCO small chain family. As to quaternary structure, heterohexadecamer of 8 large and 8 small subunits.

It localises to the plastid. The protein resides in the chloroplast. RuBisCO catalyzes two reactions: the carboxylation of D-ribulose 1,5-bisphosphate, the primary event in carbon dioxide fixation, as well as the oxidative fragmentation of the pentose substrate in the photorespiration process. Both reactions occur simultaneously and in competition at the same active site. Although the small subunit is not catalytic it is essential for maximal activity. The protein is Ribulose bisphosphate carboxylase small subunit of Detonula confervacea (Marine diatom).